The sequence spans 507 residues: Cytochrome P450 monooxygenase ptmU (507 aa).

The helical transmembrane segment at 4–24 (VNAWWVGGSLLLGIWAIVVFF) threads the bilayer. Residues asparagine 98, asparagine 202, and asparagine 398 are each glycosylated (N-linked (GlcNAc...) asparagine). Cysteine 444 provides a ligand contact to heme.

This sequence belongs to the cytochrome P450 family. It depends on heme as a cofactor.

The protein resides in the membrane. The protein operates within secondary metabolite biosynthesis. In terms of biological role, cytochrome P450 monooxygenase; part of the gene cluster that mediates the biosynthesis of the indole diterpenes penitrems. The geranylgeranyl diphosphate (GGPP) synthase ptmG catalyzes the first step in penitrem biosynthesis via conversion of farnesyl pyrophosphate and isopentyl pyrophosphate into geranylgeranyl pyrophosphate (GGPP). Condensation of indole-3-glycerol phosphate with GGPP by the prenyl transferase ptmC then forms 3-geranylgeranylindole (3-GGI). Epoxidation by the FAD-dependent monooxygenase ptmM leads to a epoxidized-GGI that is substrate of the terpene cyclase ptmB for cyclization to yield paspaline. Paspaline is subsequently converted to 13-desoxypaxilline by the cytochrome P450 monooxygenase ptmP, the latter being then converted to paxilline by the cytochrome P450 monooxygenase ptmQ. Paxilline is converted to beta-paxitriol via C-10 ketoreduction by the short-chain dehydrogenase ptmH which can be monoprenylated at the C-20 by the indole diterpene prenyltransferase ptmD. A two-step elimination (acetylation and elimination) process performed by the O-acetyltransferase ptmV and ptmI leads to the production of the prenylated form of penijanthine. The FAD-linked oxidoreductase ptmO then converts the prenylated form of penijanthine into PC-M5 which is in turn transformed into PC-M4 by the aromatic dimethylallyltransferase ptmE. Five sequential oxidative transformations performed by the cytochrome P450 monooxygenases ptmK, ptmU, ptmL, ptmN and ptmJ yield the various penitrem compounds. PtmK, ptmU and ptmM are involved in the formation of the key bicyclic ring of penitrem C via the formation of the intermediates secopenitrem D and penitrem D. PtmL catalyzes the epoxidation of penitrem D and C to yield penitrem B and F, respectively. PtmJ catalyzes the last benzylic hydroxylation to convert penitrem B to prenitrem E and penitrem F to penitrem A. The protein is Cytochrome P450 monooxygenase ptmU of Penicillium ochrochloron.